The chain runs to 512 residues: MKRCYITTPIYYASGKPHIGHAFTTILADVIKRYKQQNGYEAYFLTGTDEHGNKIESKAKSLGLDPQTFVDQNVAYFQQMWKQLDINFDHFIRTTDLSHKAQVQHAFQLLYDKGLIYQSNWEGAYCVECEQNYFTYDKQTMLCEIGHQLTLVQEPSLFIAFKDSKDWIGEMIATNKLNITPESRAAELKNNFLDGGLNDLALTRQNVTWGIPVPFDNKQTIYVWFDALFNYITNLGFAHNDPKFNKWWNNNDEEHEVIHLISREITRFHCIYWPIFLHQLGFKLPTQFLSHGWIVDGNGHKMSKSLGNVISPEELLAQFGVDGTRYCLLKEMRLDKDNRCSMAIFKDIYNADLANSFGNHASRTFGMIKKYLGGQLDFIEVQDPQVKQLMDQANQAMVQFDTAWNNFQFYKGINGLLQLVFQASKLIDQLKPWELVKQTDYTLLKQLLFACVRCTQVCFVLLAPILVHTSTQIFDLFNFSAQARSKTHLADPQQLQKISLAPVIQPLFKRLD.

The 'HIGH' region signature appears at 11-21 (YYASGKPHIGH). 4 residues coordinate Zn(2+): cysteine 126, cysteine 129, cysteine 143, and histidine 147. A 'KMSKS' region motif is present at residues 301–305 (KMSKS). ATP is bound at residue lysine 304.

It belongs to the class-I aminoacyl-tRNA synthetase family. MetG type 2A subfamily. Monomer. It depends on Zn(2+) as a cofactor.

It localises to the cytoplasm. It carries out the reaction tRNA(Met) + L-methionine + ATP = L-methionyl-tRNA(Met) + AMP + diphosphate. Its function is as follows. Is required not only for elongation of protein synthesis but also for the initiation of all mRNA translation through initiator tRNA(fMet) aminoacylation. This chain is Methionine--tRNA ligase (metG), found in Mycoplasma pneumoniae (strain ATCC 29342 / M129 / Subtype 1) (Mycoplasmoides pneumoniae).